A 242-amino-acid polypeptide reads, in one-letter code: 1-(5-phosphoribosyl)-5-[(5-phosphoribosylamino)methylideneamino] imidazole-4-carboxamide isomerase (242 aa).

Residue Asp-8 is the Proton acceptor of the active site. Asp-130 functions as the Proton donor in the catalytic mechanism.

It belongs to the HisA/HisF family.

It is found in the cytoplasm. The catalysed reaction is 1-(5-phospho-beta-D-ribosyl)-5-[(5-phospho-beta-D-ribosylamino)methylideneamino]imidazole-4-carboxamide = 5-[(5-phospho-1-deoxy-D-ribulos-1-ylimino)methylamino]-1-(5-phospho-beta-D-ribosyl)imidazole-4-carboxamide. Its pathway is amino-acid biosynthesis; L-histidine biosynthesis; L-histidine from 5-phospho-alpha-D-ribose 1-diphosphate: step 4/9. In Acidithiobacillus ferrooxidans (strain ATCC 53993 / BNL-5-31) (Leptospirillum ferrooxidans (ATCC 53993)), this protein is 1-(5-phosphoribosyl)-5-[(5-phosphoribosylamino)methylideneamino] imidazole-4-carboxamide isomerase.